The following is a 136-amino-acid chain: Acyl carrier protein 1, chloroplastic (136 aa).

The transit peptide at 1-52 directs the protein to the chloroplast; the sequence is MASVTGTSISMASFKASLAPSRVSNLRSVSLPIKGKSFAPLRMRSARFVVCC. Residues 56-131 enclose the Carrier domain; that stretch reads PETVEKVCAI…DAADLIEKLI (76 aa). S91 carries the post-translational modification O-(pantetheine 4'-phosphoryl)serine.

Belongs to the acyl carrier protein (ACP) family. 4'-phosphopantetheine is transferred from CoA to a specific serine of apo-ACP by acpS. This modification is essential for activity because fatty acids are bound in thioester linkage to the sulfhydryl of the prosthetic group.

It is found in the plastid. The protein resides in the chloroplast. The protein operates within lipid metabolism; fatty acid biosynthesis. In terms of biological role, carrier of the growing fatty acid chain in fatty acid biosynthesis. This is Acyl carrier protein 1, chloroplastic (ACP1) from Casuarina glauca (Swamp oak).